Reading from the N-terminus, the 595-residue chain is Probable translation initiation factor IF-2 (595 aa).

Positions 11–225 (LRTPIVAVLG…ILVGLAQRYL (215 aa)) constitute a tr-type G domain. A G1 region spans residues 20–27 (GHVDHGKT). A GTP-binding site is contributed by 20-27 (GHVDHGKT). Residues 45 to 49 (GITQH) form a G2 region. Residues 81–84 (DTPG) are G3. Residues 81–85 (DTPGH) and 135–138 (NKID) contribute to the GTP site. The interval 135 to 138 (NKID) is G4. The segment at 203–205 (SAL) is G5.

The protein belongs to the TRAFAC class translation factor GTPase superfamily. Classic translation factor GTPase family. IF-2 subfamily.

Functionally, function in general translation initiation by promoting the binding of the formylmethionine-tRNA to ribosomes. Seems to function along with eIF-2. In Archaeoglobus fulgidus (strain ATCC 49558 / DSM 4304 / JCM 9628 / NBRC 100126 / VC-16), this protein is Probable translation initiation factor IF-2 (infB).